A 360-amino-acid chain; its full sequence is Phospho-N-acetylmuramoyl-pentapeptide-transferase (360 aa).

A run of 10 helical transmembrane segments spans residues 21 to 41 (YLSFRAILSVLTALGLSLWMG), 73 to 93 (TMGGVMILAAISITILLWANL), 94 to 114 (SNPYVWAVLAVLMGYGAVGFV), 132 to 152 (WKYFWQSAIALIVAFALYAYG), 168 to 188 (VMPQLGLMYIVLTYFVIVGTS), 199 to 219 (GLAIMPTVLVAAGFAVIAWAT), 236 to 256 (ASELVVVCTAIVGAGLGFLWF), 263 to 283 (VFMGDVGSLALGGALGTIAVL), 288 to 308 (LVLVIMGGVFVMETLSVILQV), and 338 to 358 (VIVRFWIISMVLVLIGLATLK).

It belongs to the glycosyltransferase 4 family. MraY subfamily. The cofactor is Mg(2+).

Its subcellular location is the cell inner membrane. The enzyme catalyses UDP-N-acetyl-alpha-D-muramoyl-L-alanyl-gamma-D-glutamyl-meso-2,6-diaminopimeloyl-D-alanyl-D-alanine + di-trans,octa-cis-undecaprenyl phosphate = di-trans,octa-cis-undecaprenyl diphospho-N-acetyl-alpha-D-muramoyl-L-alanyl-D-glutamyl-meso-2,6-diaminopimeloyl-D-alanyl-D-alanine + UMP. It functions in the pathway cell wall biogenesis; peptidoglycan biosynthesis. In terms of biological role, catalyzes the initial step of the lipid cycle reactions in the biosynthesis of the cell wall peptidoglycan: transfers peptidoglycan precursor phospho-MurNAc-pentapeptide from UDP-MurNAc-pentapeptide onto the lipid carrier undecaprenyl phosphate, yielding undecaprenyl-pyrophosphoryl-MurNAc-pentapeptide, known as lipid I. This Vibrio vulnificus (strain CMCP6) protein is Phospho-N-acetylmuramoyl-pentapeptide-transferase.